The primary structure comprises 611 residues: MNDNNKIIRSMVLYLLIFIAIYAMVQLYSQSTEPITDIDYGQLIKYIDANQVKSITLVGNDVKGVLKNGTEFKSRVPDVTNFMSFVNPYILQGKLDFKSEPQVGPPWWVQMLPSLFLIVIFIIFWYIFMQQAQGGGGSKVMSFGKSRARMITDKDKRVTFNDVAGADEEKEELQEIVEFLKYPKKFLELGARIPKGVLLVGPPGTGKTLLAKAVAGEAGVPFFSISGSDFVEMFVGVGAARVRDLFDQAKKNAPCIVFIDEIDAVGRQRGAGLGGGHDEREQTLNQLLVEMDGFSVNEGIIVIAATNRPDILDPALLRPGRFDRHITVGIPDIKGREEILKIHSRNKPLAPDVSLQVLARRTPGFTGADLENLMNEAALLAARRGLKQITMAELEEAITRVIAGPEKRSRIMSEKDKKLVAYHEAGHAVVAKLLPNTPPVHEVTIIPRGRAGGYTMLLPEEDKYYMSKSEMMDEIVHLLGGRVAESLVLNDISTGAQNDIERATNIARKMVTEYGMSERLGPMTFGTKSEEVFLGRDLGRTRNYSEEVAAEIDREIKRIIEEAYKRAESLLKENIDKLHRVAKALIEKEKLNGEEFEKVFNGEDIEGVQFA.

Over 1–6 (MNDNNK) the chain is Cytoplasmic. The helical transmembrane segment at 7-27 (IIRSMVLYLLIFIAIYAMVQL) threads the bilayer. Topologically, residues 28 to 107 (YSQSTEPITD…KSEPQVGPPW (80 aa)) are extracellular. Residues 108 to 128 (WVQMLPSLFLIVIFIIFWYIF) traverse the membrane as a helical segment. Residue 124-131 (FWYIFMQQ) participates in ATP binding. At 129–611 (MQQAQGGGGS…GEDIEGVQFA (483 aa)) the chain is on the cytoplasmic side. H423 provides a ligand contact to Zn(2+). The active site involves E424. H427 and D499 together coordinate Zn(2+).

This sequence in the central section; belongs to the AAA ATPase family. The protein in the C-terminal section; belongs to the peptidase M41 family. As to quaternary structure, homohexamer. It depends on Zn(2+) as a cofactor.

The protein localises to the cell membrane. Its function is as follows. Acts as a processive, ATP-dependent zinc metallopeptidase for both cytoplasmic and membrane proteins. Plays a role in the quality control of integral membrane proteins. This chain is ATP-dependent zinc metalloprotease FtsH 1, found in Thermoanaerobacter sp. (strain X514).